We begin with the raw amino-acid sequence, 402 residues long: Imidazolonepropionase (402 aa).

Residues H66 and H68 each coordinate Fe(3+). 2 residues coordinate Zn(2+): H66 and H68. Positions 75, 138, and 171 each coordinate 4-imidazolone-5-propanoate. Position 138 (Y138) interacts with N-formimidoyl-L-glutamate. A Fe(3+)-binding site is contributed by H236. H236 serves as a coordination point for Zn(2+). Q239 serves as a coordination point for 4-imidazolone-5-propanoate. Residue D311 participates in Fe(3+) binding. D311 is a binding site for Zn(2+). Residues N313 and G315 each coordinate N-formimidoyl-L-glutamate. T316 is a 4-imidazolone-5-propanoate binding site.

It belongs to the metallo-dependent hydrolases superfamily. HutI family. The cofactor is Zn(2+). Fe(3+) is required as a cofactor.

The protein localises to the cytoplasm. It carries out the reaction 4-imidazolone-5-propanoate + H2O = N-formimidoyl-L-glutamate. Its pathway is amino-acid degradation; L-histidine degradation into L-glutamate; N-formimidoyl-L-glutamate from L-histidine: step 3/3. Catalyzes the hydrolytic cleavage of the carbon-nitrogen bond in imidazolone-5-propanoate to yield N-formimidoyl-L-glutamate. It is the third step in the universal histidine degradation pathway. The sequence is that of Imidazolonepropionase from Pseudomonas aeruginosa (strain UCBPP-PA14).